We begin with the raw amino-acid sequence, 705 residues long: 1,4-alpha-glucan branching enzyme GlgB (705 aa).

The Nucleophile role is filled by D393. The active-site Proton donor is E446.

It belongs to the glycosyl hydrolase 13 family. GlgB subfamily. In terms of assembly, monomer.

It catalyses the reaction Transfers a segment of a (1-&gt;4)-alpha-D-glucan chain to a primary hydroxy group in a similar glucan chain.. It participates in glycan biosynthesis; glycogen biosynthesis. Functionally, catalyzes the formation of the alpha-1,6-glucosidic linkages in glycogen by scission of a 1,4-alpha-linked oligosaccharide from growing alpha-1,4-glucan chains and the subsequent attachment of the oligosaccharide to the alpha-1,6 position. The sequence is that of 1,4-alpha-glucan branching enzyme GlgB from Picrophilus torridus (strain ATCC 700027 / DSM 9790 / JCM 10055 / NBRC 100828 / KAW 2/3).